A 320-amino-acid chain; its full sequence is Cytochrome f (320 aa).

A signal peptide spans Met1–Ala35. Tyr36, Cys56, Cys59, and His60 together coordinate heme. The chain crosses the membrane as a helical span at residues Val286 to Lys306.

The protein belongs to the cytochrome f family. As to quaternary structure, the 4 large subunits of the cytochrome b6-f complex are cytochrome b6, subunit IV (17 kDa polypeptide, petD), cytochrome f and the Rieske protein, while the 4 small subunits are PetG, PetL, PetM and PetN. The complex functions as a dimer. Requires heme as cofactor.

It localises to the plastid thylakoid membrane. Component of the cytochrome b6-f complex, which mediates electron transfer between photosystem II (PSII) and photosystem I (PSI), cyclic electron flow around PSI, and state transitions. The protein is Cytochrome f of Cuscuta obtusiflora (Peruvian dodder).